The chain runs to 252 residues: Protein BTG3 (252 aa).

Residues 138-162 (VTSDYHSGSSSSDEDTSKEVEVKPS) are disordered.

It belongs to the BTG family. Highly expressed in the brain.

Its function is as follows. Overexpression impairs serum-induced cell cycle progression from the G0/G1 to S phase. This chain is Protein BTG3, found in Rattus norvegicus (Rat).